The chain runs to 286 residues: Pyridoxal kinase PdxY (286 aa).

Residues Ser-9 and 44 to 45 (MQ) each bind substrate. ATP is bound by residues Asp-111, Glu-147, and Lys-180. Asp-221 contacts substrate.

It belongs to the pyridoxine kinase family. PdxY subfamily. Homodimer. Mg(2+) is required as a cofactor.

The enzyme catalyses pyridoxal + ATP = pyridoxal 5'-phosphate + ADP + H(+). It functions in the pathway cofactor metabolism; pyridoxal 5'-phosphate salvage; pyridoxal 5'-phosphate from pyridoxal: step 1/1. In terms of biological role, pyridoxal kinase involved in the salvage pathway of pyridoxal 5'-phosphate (PLP). Catalyzes the phosphorylation of pyridoxal to PLP. The polypeptide is Pyridoxal kinase PdxY (Burkholderia orbicola (strain AU 1054)).